The chain runs to 100 residues: uncharacterized protein (100 aa).

The protein resides in the secreted. This is an uncharacterized protein from Mycobacterium leprae (strain TN).